The primary structure comprises 293 residues: Single-pass membrane and coiled-coil domain-containing protein 2 (293 aa).

The stretch at 116 to 188 (KNLLEFLLKD…SAKLRMYQME (73 aa)) forms a coiled coil. A helical membrane pass occupies residues 234-254 (IFIMFYVLTVTGLLCYILFFG).

It is found in the membrane. This Macaca fascicularis (Crab-eating macaque) protein is Single-pass membrane and coiled-coil domain-containing protein 2 (SMCO2).